The chain runs to 123 residues: Ribosome-binding factor A (123 aa).

The protein belongs to the RbfA family. As to quaternary structure, monomer. Binds 30S ribosomal subunits, but not 50S ribosomal subunits or 70S ribosomes.

Its subcellular location is the cytoplasm. In terms of biological role, one of several proteins that assist in the late maturation steps of the functional core of the 30S ribosomal subunit. Associates with free 30S ribosomal subunits (but not with 30S subunits that are part of 70S ribosomes or polysomes). Required for efficient processing of 16S rRNA. May interact with the 5'-terminal helix region of 16S rRNA. In Variovorax paradoxus (strain S110), this protein is Ribosome-binding factor A.